Here is a 407-residue protein sequence, read N- to C-terminus: Imidazolonepropionase (407 aa).

2 residues coordinate Fe(3+): His-68 and His-70. Zn(2+) contacts are provided by His-68 and His-70. Arg-77, Tyr-140, and His-173 together coordinate 4-imidazolone-5-propanoate. Residue Tyr-140 coordinates N-formimidoyl-L-glutamate. Fe(3+) is bound at residue His-238. His-238 lines the Zn(2+) pocket. A 4-imidazolone-5-propanoate-binding site is contributed by Gln-241. Asp-313 contributes to the Fe(3+) binding site. Zn(2+) is bound at residue Asp-313. N-formimidoyl-L-glutamate contacts are provided by Asn-315 and Gly-317. Thr-318 serves as a coordination point for 4-imidazolone-5-propanoate.

The protein belongs to the metallo-dependent hydrolases superfamily. HutI family. The cofactor is Zn(2+). Fe(3+) serves as cofactor.

It is found in the cytoplasm. The enzyme catalyses 4-imidazolone-5-propanoate + H2O = N-formimidoyl-L-glutamate. It functions in the pathway amino-acid degradation; L-histidine degradation into L-glutamate; N-formimidoyl-L-glutamate from L-histidine: step 3/3. Its function is as follows. Catalyzes the hydrolytic cleavage of the carbon-nitrogen bond in imidazolone-5-propanoate to yield N-formimidoyl-L-glutamate. It is the third step in the universal histidine degradation pathway. This chain is Imidazolonepropionase, found in Burkholderia orbicola (strain MC0-3).